The sequence spans 1060 residues: DNA-directed RNA polymerase subunit beta (1060 aa).

This sequence belongs to the RNA polymerase beta chain family. In plastids the minimal PEP RNA polymerase catalytic core is composed of four subunits: alpha, beta, beta', and beta''. When a (nuclear-encoded) sigma factor is associated with the core the holoenzyme is formed, which can initiate transcription.

The protein localises to the plastid. It localises to the chloroplast. The catalysed reaction is RNA(n) + a ribonucleoside 5'-triphosphate = RNA(n+1) + diphosphate. Its function is as follows. DNA-dependent RNA polymerase catalyzes the transcription of DNA into RNA using the four ribonucleoside triphosphates as substrates. This chain is DNA-directed RNA polymerase subunit beta, found in Calycanthus floridus var. glaucus (Eastern sweetshrub).